Reading from the N-terminus, the 1493-residue chain is Protein Shroom4 (1493 aa).

Residues 10–92 enclose the PDZ domain; sequence YVPVQLQGGA…ILKLIVRRRN (83 aa). The disordered stretch occupies residues 202 to 282; that stretch reads CALSLRPEEP…PPQPPVRRDS (81 aa). 2 stretches are compositionally biased toward polar residues: residues 234-243 and 249-262; these read AETSGGSRRT and TPSS…QEGY. The residue at position 411 (serine 411) is a Phosphoserine. Residues 430-695 form a disordered region; sequence GSKGMELPPV…SPGQRPGQSS (266 aa). Basic and acidic residues-rich tracts occupy residues 470–484 and 498–509; these read QSSK…DDRS and GEADGHPSEKGF. The span at 513–547 shows a compositional bias: polar residues; that stretch reads NRTSRAASELANQQPSASGSLVQQATDCSSTTKAA. Serine 729 is subject to Phosphoserine. Disordered regions lie at residues 740 to 759 and 781 to 813; these read AAME…ASTA and SKSL…NFQP. A compositionally biased stretch (polar residues) spans 782–802; the sequence is KSLSTSHLPGLTTHSNKTFTQ. Serine 1019 carries the phosphoserine modification. Disordered regions lie at residues 1117-1170, 1187-1206, 1214-1236, and 1246-1265; these read AAQQ…ETSG, SFGH…AEQE, DFLP…PCYY, and GQEA…PPSG. Residues 1118-1129 are compositionally biased toward low complexity; the sequence is AQQQKQQQQQQK. The span at 1132 to 1159 shows a compositional bias: acidic residues; the sequence is EEEEEEEEEEEEEEEEEEEEAEEEEEEL. One can recognise an ASD2 domain in the interval 1213 to 1492; sequence SDFLPPIRGH…RESLLLGPSN (280 aa). Residues 1382–1488 are a coiled coil; it reads LSGRLARVEN…LKCLRESLLL (107 aa).

The protein belongs to the shroom family. As to quaternary structure, interacts directly with F-actin. In terms of tissue distribution, expressed in all fetal and adult tissues investigated. Expressed in adult heart, brain, placenta, lung, liver, skeletal muscle, kidney and pancreas. In brain regions detected in cerebellum, cerebral cortex, medulla, spinal cord, occipital pole, frontal lobe, temporal lobe and putamen. The expression is strongest in the medulla and weakest in the cerebral cortex.

It localises to the cytoplasm. Its subcellular location is the cytoskeleton. Its function is as follows. Probable regulator of cytoskeletal architecture that plays an important role in development. May regulate cellular and cytoskeletal architecture by modulating the spatial distribution of myosin II. This is Protein Shroom4 (SHROOM4) from Homo sapiens (Human).